The chain runs to 206 residues: Small ribosomal subunit protein uS4 (206 aa).

Residues 94 to 157 (RRLDNVVYRL…RRRTYFKNLI (64 aa)) enclose the S4 RNA-binding domain.

Belongs to the universal ribosomal protein uS4 family. Part of the 30S ribosomal subunit. Contacts protein S5. The interaction surface between S4 and S5 is involved in control of translational fidelity.

One of the primary rRNA binding proteins, it binds directly to 16S rRNA where it nucleates assembly of the body of the 30S subunit. In terms of biological role, with S5 and S12 plays an important role in translational accuracy. The chain is Small ribosomal subunit protein uS4 from Roseiflexus sp. (strain RS-1).